Here is a 305-residue protein sequence, read N- to C-terminus: UDP-3-O-acyl-N-acetylglucosamine deacetylase (305 aa).

His78, His235, and Asp239 together coordinate Zn(2+). The active-site Proton donor is His262.

It belongs to the LpxC family. Zn(2+) serves as cofactor.

The enzyme catalyses a UDP-3-O-[(3R)-3-hydroxyacyl]-N-acetyl-alpha-D-glucosamine + H2O = a UDP-3-O-[(3R)-3-hydroxyacyl]-alpha-D-glucosamine + acetate. It participates in glycolipid biosynthesis; lipid IV(A) biosynthesis; lipid IV(A) from (3R)-3-hydroxytetradecanoyl-[acyl-carrier-protein] and UDP-N-acetyl-alpha-D-glucosamine: step 2/6. In terms of biological role, catalyzes the hydrolysis of UDP-3-O-myristoyl-N-acetylglucosamine to form UDP-3-O-myristoylglucosamine and acetate, the committed step in lipid A biosynthesis. The polypeptide is UDP-3-O-acyl-N-acetylglucosamine deacetylase (Citrifermentans bemidjiense (strain ATCC BAA-1014 / DSM 16622 / JCM 12645 / Bem) (Geobacter bemidjiensis)).